A 289-amino-acid polypeptide reads, in one-letter code: 4-hydroxybenzoate octaprenyltransferase (289 aa).

7 helical membrane passes run 33 to 53, 99 to 119, 141 to 161, 163 to 183, 213 to 233, 238 to 258, and 268 to 288; these read LWAL…AVFV, LFVV…TMTI, LPQV…FAAV, ESVP…AVAY, LIIG…GRLN, EFYW…KLIV, and AFLN…MSYW.

Belongs to the UbiA prenyltransferase family. Requires Mg(2+) as cofactor.

Its subcellular location is the cell inner membrane. It carries out the reaction all-trans-octaprenyl diphosphate + 4-hydroxybenzoate = 4-hydroxy-3-(all-trans-octaprenyl)benzoate + diphosphate. The protein operates within cofactor biosynthesis; ubiquinone biosynthesis. In terms of biological role, catalyzes the prenylation of para-hydroxybenzoate (PHB) with an all-trans polyprenyl group. Mediates the second step in the final reaction sequence of ubiquinone-8 (UQ-8) biosynthesis, which is the condensation of the polyisoprenoid side chain with PHB, generating the first membrane-bound Q intermediate 3-octaprenyl-4-hydroxybenzoate. In Enterobacter sp. (strain 638), this protein is 4-hydroxybenzoate octaprenyltransferase.